A 123-amino-acid chain; its full sequence is Protein Wnt-7a (123 aa).

Serine 1 is lipidated: O-palmitoleoyl serine; by PORCN. The interval 33–61 (VEPVRTHRNKRPVFLKIKKPLSYRKPMVT) is disordered linker. The cysteines at positions 89 and 104 are disulfide-linked. N-linked (GlcNAc...) asparagine glycans are attached at residues asparagine 90 and asparagine 96.

Belongs to the Wnt family. As to quaternary structure, forms a soluble 1:1 complex with AFM; this prevents oligomerization and is required for prolonged biological activity. The complex with AFM may represent the physiological form in body fluids. Interacts with FZD5. Interacts with PORCN. In terms of processing, palmitoleoylation is required for efficient binding to frizzled receptors. Depalmitoleoylation leads to Wnt signaling pathway inhibition.

Its subcellular location is the secreted. The protein localises to the extracellular space. It is found in the extracellular matrix. Its function is as follows. Ligand for members of the frizzled family of seven transmembrane receptors that functions in the canonical Wnt/beta-catenin signaling pathway. Plays an important role in embryonic development, including dorsal versus ventral patterning during limb development, skeleton development and urogenital tract development. Required for central nervous system (CNS) angiogenesis and blood-brain barrier regulation. The polypeptide is Protein Wnt-7a (WNT-7A) (Alopias vulpinus (Common thresher shark)).